Consider the following 317-residue polypeptide: Transaldolase (317 aa).

Lys126 serves as the catalytic Schiff-base intermediate with substrate.

Belongs to the transaldolase family. Type 1 subfamily. Homodimer.

Its subcellular location is the cytoplasm. The catalysed reaction is D-sedoheptulose 7-phosphate + D-glyceraldehyde 3-phosphate = D-erythrose 4-phosphate + beta-D-fructose 6-phosphate. Its pathway is carbohydrate degradation; pentose phosphate pathway; D-glyceraldehyde 3-phosphate and beta-D-fructose 6-phosphate from D-ribose 5-phosphate and D-xylulose 5-phosphate (non-oxidative stage): step 2/3. Its function is as follows. Transaldolase is important for the balance of metabolites in the pentose-phosphate pathway. This is Transaldolase from Burkholderia pseudomallei (strain K96243).